Here is a 249-residue protein sequence, read N- to C-terminus: Vesicle-associated membrane protein-associated protein A (249 aa).

N-acetylalanine is present on A2. Over 2-227 the chain is Cytoplasmic; sequence ASASGAMAKH…ASFRDNVTSP (226 aa). The 118-residue stretch at 14–131 folds into the MSP domain; that stretch reads ILVLDPPTDL…MDSKLRCVFE (118 aa). A phosphorylated FFAT motif binding region spans residues 50–53; sequence KVKT. K125 is modified (N6-acetyllysine). Positions 135–144 are enriched in basic and acidic residues; that stretch reads ENDKLNDMEP. Residues 135–167 are disordered; it reads ENDKLNDMEPSKAVPLNASKQDGPMPKPHSVSL. S166 is modified (phosphoserine). A coiled-coil region spans residues 169–205; that stretch reads DTETRKLMEECKRLQGEMMKLSEENRHLRDEGLRLRK. The residue at position 170 (T170) is a Phosphothreonine. 3 positions are modified to phosphoserine: S214, S216, and S219. Residues 228–248 form a helical; Anchor for type IV membrane protein membrane-spanning segment; it reads LPSLLVVIAAIFIGFFLGKFI.

This sequence belongs to the VAMP-associated protein (VAP) (TC 9.B.17) family. Homodimer; disulfide-linked. Heterodimer with VAPB. Interacts with VAMP1, VAMP2, STX1A, BET1, SEC22C and with the C-terminal domain of OCLN. Interacts (via MSP domain) with OSBPL1A (via FFAT motif). Interacts (via MSP domain) with ZFYVE27; may retain ZFYVE27 in the endoplasmic reticulum and regulate its function in cell projections formation. Interacts with OSBP. Interacts (via C-terminus) with RSAD2/viperin (via C-terminus). Interacts with IFITM3. Interacts with OSBPL3 (phosphorylated form). Interacts with KIF5A in a ZFYVE27-dependent manner. Interacts (via MSP domain) with STARD3 (via phosphorylated FFAT motif); this interaction recruits VAPA to the endosome. Interacts with STARD3NL (via FFAT motif). Interacts with CERT1. Interacts with PLEKHA3 and SACM1L to form a ternary complex. Interacts with VPS13A (via FFAT motif). Interacts with RB1CC1 (via phosphorylated FFAT motif), MIGA2 (via phosphorylated FFAT motif), RMDN3 (via phosphorylated FFAT motif), KCNB1 (via phosphorylated FFAT motif) and KCNB2 (via phosphorylated FFAT motif). Interacts (via MSP domain) with WDR44 (via FFAT-like motif); the interactions connect the endoplasmic reticulum (ER) with the endosomal tubule. As to quaternary structure, (Microbial infection) Interacts with HCV protein NS5A and NS5B. In terms of tissue distribution, ubiquitous.

The protein localises to the endoplasmic reticulum membrane. The protein resides in the cell membrane. It localises to the cell junction. It is found in the tight junction. Its subcellular location is the nucleus membrane. Functionally, endoplasmic reticulum (ER)-anchored protein that mediates the formation of contact sites between the ER and endosomes via interaction with FFAT motif-containing proteins such as STARD3 or WDR44. STARD3-VAPA interaction enables cholesterol transfer from the ER to endosomes. Via interaction with WDR44 participates in neosynthesized protein export. In addition, recruited to the plasma membrane through OSBPL3 binding. The OSBPL3-VAPA complex stimulates RRAS signaling which in turn attenuates integrin beta-1 (ITGB1) activation at the cell surface. With OSBPL3, may regulate ER morphology. May play a role in vesicle trafficking. This is Vesicle-associated membrane protein-associated protein A from Homo sapiens (Human).